We begin with the raw amino-acid sequence, 291 residues long: MRRNLTPFFFLLPALTLMVPFVIYPVFKTIYLSFFLGDKFVGLENYKNVLLSPDIVNLERFPTKSPPWGALIHNIVWIAIHLPTTIFLGLGFALLLRKKEVKGSSIIKSIIFLGMVIPMVVGGLIIRFLFEEGAGVIPAFFKLIGIEKLAITWTAYPQTALFSVILGSIWIWTGFSMLMYSAGLASIPKDYYEAALIDGANKFQIFRFVIWPLLRPITVVIVAMTLLWDLKIFDIVYVATGGGPGGASMVLALQMWDYFARSLNYNYAAVVAVLLTALTFIPALWLIKRRG.

8 helical membrane passes run 7 to 27 (PFFF…YPVF), 75 to 95 (IVWI…FALL), 106 to 126 (IIKS…GLII), 133 to 153 (GAGV…AITW), 160 to 180 (ALFS…MLMY), 208 to 228 (FVIW…TLLW), 232 to 252 (IFDI…MVLA), and 267 to 287 (YAAV…LWLI). Residues 71–286 (LIHNIVWIAI…ALTFIPALWL (216 aa)) form the ABC transmembrane type-1 domain.

The protein belongs to the binding-protein-dependent transport system permease family. MalFG subfamily.

It localises to the cell membrane. Probably part of a binding-protein-dependent transport system PH1036/38/39. Probably responsible for the translocation of the substrate across the membrane. This is Probable ABC transporter permease protein PH1038 from Pyrococcus horikoshii (strain ATCC 700860 / DSM 12428 / JCM 9974 / NBRC 100139 / OT-3).